Here is a 583-residue protein sequence, read N- to C-terminus: Long-chain-fatty-acid--AMP ligase FadD26 (583 aa).

This sequence belongs to the ATP-dependent AMP-binding enzyme family.

The catalysed reaction is holo-[(phenol)carboxyphthiodiolenone synthase] + a long-chain fatty acid + ATP = a long-chain fatty acyl-[(phenol)carboxyphthiodiolenone synthase] + AMP + diphosphate. It carries out the reaction eicosanoate + holo-[(phenol)carboxyphthiodiolenone synthase] + ATP = icosanoyl-[(phenol)carboxyphthiodiolenone synthase] + AMP + diphosphate. It catalyses the reaction holo-[(phenol)carboxyphthiodiolenone synthase] + docosanoate + ATP = docosanoyl-[(phenol)carboxyphthiodiolenone synthase] + AMP + diphosphate. Its pathway is lipid metabolism; fatty acid biosynthesis. In terms of biological role, catalyzes the activation of long-chain fatty acids as acyl-adenylates (acyl-AMP), which are then transferred to the multifunctional polyketide synthase PpsA for further chain extension. Catalyzes the adenylation of the long-chain fatty acids eicosanoate (C20) or docosanoate (C22), and potentially the very-long-chain fatty acid lignocerate (C24). Involved in the biosynthesis of phthiocerol dimycocerosate (DIM A) and phthiodiolone dimycocerosate (DIM B). The polypeptide is Long-chain-fatty-acid--AMP ligase FadD26 (fadD26) (Mycobacterium bovis (strain ATCC BAA-935 / AF2122/97)).